The primary structure comprises 567 residues: Geranylgeranyl transferase type-2 subunit alpha (567 aa).

6 PFTA repeats span residues 44-78 (LDESVLELTSQILGANPDFATLWNCRREVLQHLET), 88-122 (LVKAELGFLESCLRVNPKSYGTWHHRCWLLSRLPE), 124-158 (NWARELELCARFLEADERNFHCWDYRRFVAAQAAV), 159-193 (APAEELAFTDSLITRNFSNYSSWHYRSCLLPQLHP), 207-241 (VLLKELELVQNAFFTDPNDQSAWFYHRWLLGRAEP), and 363-397 (VLQSELESCKELQELEPENKWCLLTIILLMRALDP). A Phosphoserine modification is found at Ser-98. 5 LRR repeats span residues 442–463 (DVRVLHLAHKDLTVLCHLEQLL), 464–486 (LVTHLDLSHNRLRALPPALAALR), 487–508 (CLEVLQASDNALENVDGVANLP), 509–530 (RLQELLLCNNRLQQSAAIQPLV), and 534–555 (RLVLLNLQGNSLCQEEGIQERL).

This sequence belongs to the protein prenyltransferase subunit alpha family. Heterotrimer composed of RABGGTA, RABGGTB and CHM; within this trimer, RABGGTA and RABGGTB form the catalytic component B, while CHM (component A) mediates peptide substrate binding. The Rab GGTase dimer (RGGT) interacts with CHM (component A) prior to Rab protein binding; the association is stabilized by geranylgeranyl pyrophosphate (GGpp). The CHM:RGGT:Rab complex is destabilized by GGpp. Interacts with non-phosphorylated form of RAB8A; phosphorylation of RAB8A at 'Thr-72' disrupts this interaction. Most abundant in the heart, brain, spleen and liver. Less in the lung, muscle, kidney and testis; in these tissues less abundant than the beta subunit.

It carries out the reaction geranylgeranyl diphosphate + L-cysteinyl-[protein] = S-geranylgeranyl-L-cysteinyl-[protein] + diphosphate. With respect to regulation, the enzymatic reaction requires the aid of a Rab escort protein (also called component A), such as CHM. Catalyzes the transfer of a geranylgeranyl moiety from geranylgeranyl diphosphate to both cysteines of Rab proteins with the C-terminal sequence -XXCC, -XCXC and -CCXX, such as RAB1A, RAB3A, RAB5A and RAB7A. The protein is Geranylgeranyl transferase type-2 subunit alpha (Rabggta) of Rattus norvegicus (Rat).